Here is a 149-residue protein sequence, read N- to C-terminus: Large ribosomal subunit protein bL9 (149 aa).

It belongs to the bacterial ribosomal protein bL9 family.

Functionally, binds to the 23S rRNA. The sequence is that of Large ribosomal subunit protein bL9 from Xanthomonas axonopodis pv. citri (strain 306).